A 154-amino-acid chain; its full sequence is Myoglobin (154 aa).

Residues 2–148 form the Globin domain; the sequence is GLSEGEWQLV…FRKDIATKYK (147 aa). The residue at position 4 (S4) is a Phosphoserine. Nitrite is bound at residue H65. Residue H65 coordinates O2. Phosphothreonine is present on T68. H94 contributes to the heme b binding site.

This sequence belongs to the globin family. As to quaternary structure, monomeric.

Its subcellular location is the cytoplasm. The protein localises to the sarcoplasm. The enzyme catalyses Fe(III)-heme b-[protein] + nitric oxide + H2O = Fe(II)-heme b-[protein] + nitrite + 2 H(+). It catalyses the reaction H2O2 + AH2 = A + 2 H2O. Monomeric heme protein which primary function is to store oxygen and facilitate its diffusion within muscle tissues. Reversibly binds oxygen through a pentacoordinated heme iron and enables its timely and efficient release as needed during periods of heightened demand. Depending on the oxidative conditions of tissues and cells, and in addition to its ability to bind oxygen, it also has a nitrite reductase activity whereby it regulates the production of bioactive nitric oxide. Under stress conditions, like hypoxia and anoxia, it also protects cells against reactive oxygen species thanks to its pseudoperoxidase activity. The sequence is that of Myoglobin (MB) from Phocoenoides dalli dalli (Dall's porpoise).